The following is a 286-amino-acid chain: Inositol polyphosphate multikinase alpha (286 aa).

The tract at residues 1 to 22 (MQLKVPEHQVAGHIAKDGKPGP) is disordered.

Belongs to the inositol phosphokinase (IPK) family. In terms of processing, phosphorylated. As to expression, detected in leaves, stems, roots, siliques and flowers. Highly expressed in root tissues, anthers, the stigma, pollen grains and growing pollen tubes.

It localises to the nucleus. The protein resides in the cell membrane. The enzyme catalyses 1D-myo-inositol 1,4,5-trisphosphate + 2 ATP = 1D-myo-inositol 1,3,4,5,6-pentakisphosphate + 2 ADP + 2 H(+). It catalyses the reaction 1D-myo-inositol 1,3,4,6-tetrakisphosphate + ATP = 1D-myo-inositol 1,3,4,5,6-pentakisphosphate + ADP + H(+). Functionally, inositol phosphate kinase with a broad substrate specificity. Phosphorylates inositol 1,4,5-trisphosphate (Ins(1,4,5)P3), inositol 1,4,5,6-tetrakisphosphate (Ins(1,4,5,6)P4), inositol 1,3,4,5-tetrakisphosphate (Ins(1,3,4,5)P4), inositol 1,3,4,6-tetrakisphosphate (Ins(1,3,4,6)P4) and inositol 1,2,3,4,6-pentakisphosphate (Ins(1,2,3,4,6)P5) but not inositol 1,4-bisphosphate (Ins(1,4)P2), inositol 1,3,4-trisphosphate (Ins(1,3,4)P3), inositol 1,2,6-trisphosphate (Ins(1,2,6)P3), inositol 3,4,5,6-tetrakisphosphate (Ins(3,4,5,6)P4), inositol 1,3,4,5,6-pentakisphosphate (Ins(1,3,4,5,6)P5), inositol 1,2,4,5,6-pentakisphosphate (Ins(1,2,4,5,6)P5) or inositol hexakisphosphate (InsP6). Regulates pollen and root development probably through the regulation of InsP3-mediated calcium accumulation. This chain is Inositol polyphosphate multikinase alpha (IPK2a), found in Arabidopsis thaliana (Mouse-ear cress).